We begin with the raw amino-acid sequence, 172 residues long: MLSLVLCFFVMFLLGVAVVVLSPSPYFSALGLVFVAVSGCFIVLYHGGTFLSLVLVLLYLGGMMVVFVYSAALAADPYPEVLGGRVIWFFVICVLCICFAGYMSFNDFFLDVSVACEGADYTGGIFGAEWLGVTTFYEVGLILVLAGWALLVCLFSVLVVVRGVNRGALRAV.

Transmembrane regions (helical) follow at residues 1-21 (MLSLVLCFFVMFLLGVAVVVL), 25-45 (PYFSALGLVFVAVSGCFIVLY), 48-68 (GTFLSLVLVLLYLGGMMVVFV), 86-106 (VIWFFVICVLCICFAGYMSFN), 108-128 (FFLDVSVACEGADYTGGIFGA), and 141-161 (LILVLAGWALLVCLFSVLVVV).

This sequence belongs to the complex I subunit 6 family.

Its subcellular location is the mitochondrion membrane. It carries out the reaction a ubiquinone + NADH + 5 H(+)(in) = a ubiquinol + NAD(+) + 4 H(+)(out). Core subunit of the mitochondrial membrane respiratory chain NADH dehydrogenase (Complex I) that is believed to belong to the minimal assembly required for catalysis. Complex I functions in the transfer of electrons from NADH to the respiratory chain. The immediate electron acceptor for the enzyme is believed to be ubiquinone. This Petromyzon marinus (Sea lamprey) protein is NADH-ubiquinone oxidoreductase chain 6 (MT-ND6).